Here is a 170-residue protein sequence, read N- to C-terminus: Lipoprotein signal peptidase (170 aa).

Helical transmembrane passes span Ile13–Val33, Leu72–Glu92, Val96–Ile113, Leu116–Leu136, and Phe142–Phe162. Active-site residues include Asp124 and Asp146.

Belongs to the peptidase A8 family.

It is found in the cell inner membrane. It carries out the reaction Release of signal peptides from bacterial membrane prolipoproteins. Hydrolyzes -Xaa-Yaa-Zaa-|-(S,diacylglyceryl)Cys-, in which Xaa is hydrophobic (preferably Leu), and Yaa (Ala or Ser) and Zaa (Gly or Ala) have small, neutral side chains.. It participates in protein modification; lipoprotein biosynthesis (signal peptide cleavage). This protein specifically catalyzes the removal of signal peptides from prolipoproteins. This is Lipoprotein signal peptidase from Borrelia duttonii (strain Ly).